The following is a 118-amino-acid chain: Histone H2B.N (118 aa).

The protein belongs to the histone H2B family. The nucleosome is a histone octamer containing two molecules each of H2A, H2B, H3 and H4 assembled in one H3-H4 heterotetramer and two H2A-H2B heterodimers. The octamer wraps approximately 147 bp of DNA. Expressed in germline. Predominantly expressed in oocytes.

Its subcellular location is the nucleus. It is found in the chromosome. Its function is as follows. Core component of nucleosome. Nucleosomes wrap and compact DNA into chromatin, limiting DNA accessibility to the cellular machineries which require DNA as a template. Histones thereby play a central role in transcription regulation, DNA repair, DNA replication and chromosomal stability. DNA accessibility is regulated via a complex set of post-translational modifications of histones, also called histone code, and nucleosome remodeling. The chain is Histone H2B.N from Homo sapiens (Human).